The following is a 68-amino-acid chain: Glu S.griseus protease inhibitor (68 aa).

Serine 1 carries the N-acetylserine modification. Cysteine 3 and cysteine 48 form a disulfide bridge.

It belongs to the protease inhibitor I13 (potato type I serine protease inhibitor) family.

Competitively inhibits Glu S.griseus protease by forming probably a 1:1 complex. BGIA has no inhibitory activity against 2 other acidic amino acid-specific endopeptidases (S.aureus protease V8 and B.subtilis proteinase), chymotrypsin, trypsin, pancreatic elastase, and papain, although subtilisin Carlsberg was strongly inhibited. The chain is Glu S.griseus protease inhibitor from Momordica charantia (Bitter gourd).